Consider the following 357-residue polypeptide: D-alanine--D-alanine ligase (357 aa).

An ATP-grasp domain is found at 134–339 (KQLFEHRGLP…YPDLIAKLID (206 aa)). Position 167 to 222 (167 to 222 (NDKLTYPVFVKPANLGSSVGISKCNNEEELKSGIAEAFQFDRKLVIEQGINAREIE)) interacts with ATP. Positions 293, 306, and 308 each coordinate Mg(2+).

This sequence belongs to the D-alanine--D-alanine ligase family. The cofactor is Mg(2+). Requires Mn(2+) as cofactor.

It localises to the cytoplasm. It catalyses the reaction 2 D-alanine + ATP = D-alanyl-D-alanine + ADP + phosphate + H(+). It participates in cell wall biogenesis; peptidoglycan biosynthesis. Its function is as follows. Cell wall formation. The chain is D-alanine--D-alanine ligase from Staphylococcus epidermidis (strain ATCC 35984 / DSM 28319 / BCRC 17069 / CCUG 31568 / BM 3577 / RP62A).